Reading from the N-terminus, the 483-residue chain is ATP-dependent protease ATPase subunit HslU (483 aa).

ATP contacts are provided by residues V18 and 60 to 65; that span reads GVGKTE. 2 stretches are compositionally biased toward low complexity: residues 136-147 and 171-181; these read LPGGAPQPAPAQ and AQADASQASPP. A disordered region spans residues 136-212; that stretch reads LPGGAPQPAP…HGGKLDDREV (77 aa). Residues 182 to 191 show a composition bias toward polar residues; sequence TGTGSAPDSR. Residues 192–209 show a composition bias toward basic and acidic residues; that stretch reads SSTREKLRTLWHGGKLDD. Residues D296, E361, and R433 each contribute to the ATP site.

Belongs to the ClpX chaperone family. HslU subfamily. As to quaternary structure, a double ring-shaped homohexamer of HslV is capped on each side by a ring-shaped HslU homohexamer. The assembly of the HslU/HslV complex is dependent on binding of ATP.

The protein localises to the cytoplasm. ATPase subunit of a proteasome-like degradation complex; this subunit has chaperone activity. The binding of ATP and its subsequent hydrolysis by HslU are essential for unfolding of protein substrates subsequently hydrolyzed by HslV. HslU recognizes the N-terminal part of its protein substrates and unfolds these before they are guided to HslV for hydrolysis. The protein is ATP-dependent protease ATPase subunit HslU of Nitratidesulfovibrio vulgaris (strain DSM 19637 / Miyazaki F) (Desulfovibrio vulgaris).